A 411-amino-acid chain; its full sequence is Glycerol-3-phosphate dehydrogenase [NAD(+)] (411 aa).

NAD(+) contacts are provided by residues 71-76 (GSGNWG), phenylalanine 103, and phenylalanine 159. Lysine 182 is a binding site for substrate. Alanine 215 is an NAD(+) binding site. Residue lysine 275 is the Proton acceptor of the active site. Positions 340 and 369 each coordinate NAD(+). Substrate is bound at residue 340-341 (RN).

It belongs to the NAD-dependent glycerol-3-phosphate dehydrogenase family.

It catalyses the reaction sn-glycerol 3-phosphate + NAD(+) = dihydroxyacetone phosphate + NADH + H(+). The chain is Glycerol-3-phosphate dehydrogenase [NAD(+)] (GPD) from Lachancea thermotolerans (Yeast).